The following is a 182-amino-acid chain: Heat shock protein beta-2 (182 aa).

The 109-residue stretch at 55-163 (RAGEGGRAGA…DTEVNEVYIS (109 aa)) folds into the sHSP domain.

The protein belongs to the small heat shock protein (HSP20) family. As to quaternary structure, interacts with DMPK; may enhance its kinase activity.

The protein localises to the cytoplasm. It localises to the nucleus. In terms of biological role, may regulate the kinase DMPK. This Rattus norvegicus (Rat) protein is Heat shock protein beta-2 (Hspb2).